The primary structure comprises 651 residues: Probable Xaa-Pro aminopeptidase P (651 aa).

Mn(2+) contacts are provided by Asp448, Asp459, Glu557, and Glu571.

The protein belongs to the peptidase M24B family. Mn(2+) is required as a cofactor.

The catalysed reaction is Release of any N-terminal amino acid, including proline, that is linked to proline, even from a dipeptide or tripeptide.. Functionally, catalyzes the removal of a penultimate prolyl residue from the N-termini of peptides. This chain is Probable Xaa-Pro aminopeptidase P (AMPP), found in Coccidioides posadasii (strain C735) (Valley fever fungus).